We begin with the raw amino-acid sequence, 335 residues long: Methionine import ATP-binding protein MetN (335 aa).

In terms of domain architecture, ABC transporter spans 2 to 241 (IQFKDSYKHY…PQHPTTRSFV (240 aa)). Position 38 to 45 (38 to 45 (GHSGAGKS)) interacts with ATP.

It belongs to the ABC transporter superfamily. Methionine importer (TC 3.A.1.24) family. In terms of assembly, the complex is composed of two ATP-binding proteins (MetN), two transmembrane proteins (MetI) and a solute-binding protein (MetQ).

Its subcellular location is the cell inner membrane. The enzyme catalyses L-methionine(out) + ATP + H2O = L-methionine(in) + ADP + phosphate + H(+). It catalyses the reaction D-methionine(out) + ATP + H2O = D-methionine(in) + ADP + phosphate + H(+). In terms of biological role, part of the ABC transporter complex MetNIQ involved in methionine import. Responsible for energy coupling to the transport system. The polypeptide is Methionine import ATP-binding protein MetN (Xylella fastidiosa (strain Temecula1 / ATCC 700964)).